A 69-amino-acid polypeptide reads, in one-letter code: Neurotoxin Cex3 (69 aa).

Residue A1 is a signal peptide. The 66-residue stretch at K2–G67 folds into the LCN-type CS-alpha/beta domain. Cystine bridges form between C13–C66, C17–C42, C26–C47, and C30–C49. Position 66 is a cysteine amide (C66). The propeptide occupies G67–K69.

This sequence belongs to the long (4 C-C) scorpion toxin superfamily. Sodium channel inhibitor family. Beta subfamily. As to expression, expressed by the venom gland.

The protein resides in the secreted. Functionally, beta toxins bind voltage-independently at site-4 of sodium channels (Nav) and shift the voltage of activation toward more negative potentials thereby affecting sodium channel activation and promoting spontaneous and repetitive firing. The polypeptide is Neurotoxin Cex3 (Centruroides exilicauda (Bark scorpion)).